The following is a 420-amino-acid chain: UPF0229 protein LPC_3097 (420 aa).

The segment at 83–107 is disordered; sequence IAGDRIKRPGGGAGGAGGNASDSGE. Gly residues predominate over residues 91–100; that stretch reads PGGGAGGAGG.

Belongs to the UPF0229 family.

The sequence is that of UPF0229 protein LPC_3097 from Legionella pneumophila (strain Corby).